A 909-amino-acid chain; its full sequence is Zinc finger and BTB domain-containing protein 41 (909 aa).

The BTB domain occupies 88 to 152 (CDLLIIVEGK…LYTSEFFVYK (65 aa)). The C2H2-type 1 zinc finger occupies 207–230 (HQCKFCSRHFCYKKSLENHLAKTH). A disordered region spans residues 252 to 344 (RSKRNRKCPV…PEAGDSVGNV (93 aa)). A compositionally biased stretch (acidic residues) spans 266 to 275 (TSDDEQESGD). The span at 284–295 (NFDKEKSDRNDS) shows a compositional bias: basic and acidic residues. A compositionally biased stretch (acidic residues) spans 296–322 (EDPGSEYNAEEDELEEEMSDEYSDIEE). C2H2-type zinc fingers lie at residues 361–383 (LQCP…TRVH), 389–411 (FECD…RKKH), 422–445 (HKCP…KRFH), 463–485 (WKCD…MILH), 491–514 (FKCT…EKFH), 518–541 (FPCD…ECTH), 547–569 (WTCF…LRIH), 575–597 (HLCS…LRVH), 603–625 (YECD…KKIH), 631–654 (HQCE…KSVH), 668–690 (HQCD…FRTH), 696–718 (YKCQ…LVIH), and 724–747 (FNCQ…DHVH).

It localises to the nucleus. Functionally, may be involved in transcriptional regulation. In Homo sapiens (Human), this protein is Zinc finger and BTB domain-containing protein 41 (ZBTB41).